The primary structure comprises 214 residues: 3,4-dihydroxy-2-butanone 4-phosphate synthase (214 aa).

D-ribulose 5-phosphate-binding positions include 37 to 38 (RE), Asp-42, 150 to 154 (RRGHT), and Glu-174. A Mg(2+)-binding site is contributed by Glu-38. His-153 serves as a coordination point for Mg(2+).

It belongs to the DHBP synthase family. In terms of assembly, homodimer. Requires Mg(2+) as cofactor. Mn(2+) serves as cofactor.

It carries out the reaction D-ribulose 5-phosphate = (2S)-2-hydroxy-3-oxobutyl phosphate + formate + H(+). It participates in cofactor biosynthesis; riboflavin biosynthesis; 2-hydroxy-3-oxobutyl phosphate from D-ribulose 5-phosphate: step 1/1. Functionally, catalyzes the conversion of D-ribulose 5-phosphate to formate and 3,4-dihydroxy-2-butanone 4-phosphate. This Nitratidesulfovibrio vulgaris (strain DP4) (Desulfovibrio vulgaris) protein is 3,4-dihydroxy-2-butanone 4-phosphate synthase.